Consider the following 309-residue polypeptide: Dihydroorotate dehydrogenase B (NAD(+)), catalytic subunit (309 aa).

FMN is bound by residues serine 21 and 45–46; that span reads KA. Substrate contacts are provided by residues lysine 45 and 69-73; that span reads NAIGL. Asparagine 99 and asparagine 127 together coordinate FMN. Position 127 (asparagine 127) interacts with substrate. Cysteine 130 acts as the Nucleophile in catalysis. FMN-binding residues include lysine 165 and isoleucine 191. 192-193 is a substrate binding site; it reads NT. Residues glycine 217, 243 to 244, and 265 to 266 contribute to the FMN site; these read GG and GT.

The protein belongs to the dihydroorotate dehydrogenase family. Type 1 subfamily. Heterotetramer of 2 PyrK and 2 PyrD type B subunits. FMN serves as cofactor.

The protein localises to the cytoplasm. The enzyme catalyses (S)-dihydroorotate + NAD(+) = orotate + NADH + H(+). The protein operates within pyrimidine metabolism; UMP biosynthesis via de novo pathway; orotate from (S)-dihydroorotate (NAD(+) route): step 1/1. Catalyzes the conversion of dihydroorotate to orotate with NAD(+) as electron acceptor. The chain is Dihydroorotate dehydrogenase B (NAD(+)), catalytic subunit (pyrD) from Bacillus cytotoxicus (strain DSM 22905 / CIP 110041 / 391-98 / NVH 391-98).